A 590-amino-acid polypeptide reads, in one-letter code: 2-hydroxyacyl-CoA lyase (590 aa).

Residues Gly-43, Gln-128, Gln-255, 273-274 (RS), and Arg-362 each bind 2-hydroxyisobutanoyl-CoA. 410-412 (GDL) contributes to the thiamine diphosphate binding site. Position 417 (Arg-417) interacts with 2-hydroxyisobutanoyl-CoA. Residue Gly-433 participates in thiamine diphosphate binding. Asp-460 contacts Mg(2+). Thiamine diphosphate is bound by residues 461–462 (GA) and 487–492 (NRAWNI). Residues Asn-487 and Ala-489 each coordinate Mg(2+). Glu-493 serves as the catalytic Proton acceptor. 561–564 (DSGK) serves as a coordination point for 2-hydroxyisobutanoyl-CoA. The C-terminal lid stretch occupies residues 566–590 (LGFVPDYQALTPWNDAEVARRQEGI).

The protein belongs to the TPP enzyme family. A homotetramer formed by a dimer of dimers; active sites are located in the dimer interface. Mg(2+) serves as cofactor. It depends on thiamine diphosphate as a cofactor.

It catalyses the reaction 2-hydroxyisobutanoyl-CoA = formyl-CoA + acetone. With respect to regulation, activity is stimulated by thiamine diphosphate. A lyase that reversibly degrades 2-hydroxyisobutyryl-CoA (2-HIB-CoA) to acetone and formyl-CoA. Probably also cleaves 2-hydroxy-2-methylbutyryl-CoA to butanone and formyl-CoA. Does not act on 2-hydroxy-2-ethylbutyryl-CoA. A C-terminal lid closes the active site upon substrate binding, and with residues Leu-127 and Ile-492 restricts the size of the active site cavity so it can only use short-chain (C4 and C5) acyl substrates. Part of a pathway that allows cells to grow on 2-methylpropane-1,2-diol or 2-hydroxyisobutyric acid (2-HIBA) as a sole carbon source. This chain is 2-hydroxyacyl-CoA lyase, found in Actinomycetospora chiangmaiensis (strain DSM 45062 / JCM 15998 / CCTCC AA 205017 / NBRC 104400 / YIM 0006).